The chain runs to 284 residues: Stomatin (284 aa).

The Cytoplasmic portion of the chain corresponds to 1–31 (MSDKRQSSHVQSQRIPESFRENSKTELGACG). The residue at position 18 (Ser18) is a Phosphoserine. Residue Cys30 is the site of S-palmitoyl cysteine attachment. An intramembrane segment occupies 32 to 52 (WILVAASFFFVIITFPISIWI). Topologically, residues 53–284 (CIKIVKEYER…MLQGIMGSNH (232 aa)) are cytoplasmic. Cys87 carries S-palmitoyl cysteine lipidation. Residues Ser161 and Ser244 each carry the phosphoserine modification. Positions 265 to 273 (STIVFPLPV) are required for homooligomerization. Residues 267–269 (IVF) form a required for lipid raft association region. The segment at 273-284 (VDMLQGIMGSNH) is interaction with LANCL1.

The protein belongs to the band 7/mec-2 family. Interacts with LANCL1. Interacts with SLC2A1. Interacts with SLC4A1; this interaction positively regulates SLC4A1 activity. Identified in large complexes with SLC40A1, SLC14A1, SLC29A1 and AQP1. Homodimer and higher order homooligomers. The homodimer is banana-shaped. Interacts with ASIC1, ASIC2 and ASIC3. Interacts with STOML1; may redistribute STOM from the plasma membrane to late endosomes. As to expression, expressed in all sensory neurons of the dorsal root ganglia. In the CNS, expressed in many neurons of the spinal cord, medulla and pons. Expressed only in scattered neurons in the cortex, hippocampus, thalamus and basal ganglia. In the cerebellum, expressed in all Purkinje cells (at protein level). Widely expressed with high levels in heart, liver, skeletal muscle and testis and low levels in lung, brain and spleen.

It is found in the cell membrane. It localises to the cytoplasm. Its subcellular location is the cytoskeleton. The protein resides in the membrane raft. The protein localises to the melanosome. It is found in the cytoplasmic vesicle. Functionally, regulates ion channel activity and transmembrane ion transport. Regulates ASIC2 and ASIC3 channel activity. In Mus musculus (Mouse), this protein is Stomatin.